The primary structure comprises 433 residues: 3-deoxy-D-manno-octulosonic acid transferase (433 aa).

Residues threonine 11–tyrosine 31 traverse the membrane as a helical; Signal-anchor segment. Glutamate 70 functions as the Proton acceptor in the catalytic mechanism. Residues proline 277–arginine 278, isoleucine 317–tryptophan 319, and asparagine 344–glutamate 347 contribute to the CMP site.

Belongs to the glycosyltransferase group 1 family. Glycosyltransferase 30 subfamily.

It localises to the cell inner membrane. It carries out the reaction lipid IVA (E. coli) + CMP-3-deoxy-beta-D-manno-octulosonate = alpha-Kdo-(2-&gt;6)-lipid IVA (E. coli) + CMP + H(+). The catalysed reaction is alpha-Kdo-(2-&gt;6)-lipid IVA (E. coli) + CMP-3-deoxy-beta-D-manno-octulosonate = alpha-Kdo-(2-&gt;4)-alpha-Kdo-(2-&gt;6)-lipid IVA (E. coli) + CMP + H(+). It catalyses the reaction alpha-Kdo-(2-&gt;4)-alpha-Kdo-(2-&gt;6)-lipid IVA (E. coli) + CMP-3-deoxy-beta-D-manno-octulosonate = alpha-Kdo-(2-&gt;8)-alpha-Kdo-(2-&gt;4)-alpha-Kdo-(2-&gt;6)-lipid IVA (E. coli) + CMP + H(+). The enzyme catalyses alpha-Kdo-(2-&gt;8)-alpha-Kdo-(2-&gt;4)-alpha-Kdo-(2-&gt;6)-lipid IVA (E. coli) + CMP-3-deoxy-beta-D-manno-octulosonate = alpha-Kdo-(2-&gt;8)-[alpha-Kdo-(2-&gt;4)]-alpha-Kdo-(2-&gt;4)-alpha-Kdo-(2-&gt;6)-lipid IVA + CMP + H(+). Its pathway is bacterial outer membrane biogenesis; LPS core biosynthesis. Involved in lipopolysaccharide (LPS) biosynthesis. Catalyzes the transfer of predominantly four 3-deoxy-D-manno-octulosonate (Kdo) residues from CMP-Kdo to lipid IV(A), the tetraacyldisaccharide-1,4'-bisphosphate precursor of lipid A. Thus generates the genus-specific LPS epitope of Chlamydia, composed of the trisaccharide alpha-Kdo-(2-&gt;8)-alpha-Kdo-(2-&gt;4)-alpha-Kdo. The sequence is that of 3-deoxy-D-manno-octulosonic acid transferase (waaA) from Chlamydophila psittaci (strain ATCC VR-125 / 6BC) (Chlamydia psittaci).